The primary structure comprises 276 residues: F420-dependent methylenetetrahydromethanopterin dehydrogenase (276 aa).

This sequence belongs to the MTD family.

The enzyme catalyses 5,10-methylenetetrahydromethanopterin + oxidized coenzyme F420-(gamma-L-Glu)(n) + 2 H(+) = 5,10-methenyl-5,6,7,8-tetrahydromethanopterin + reduced coenzyme F420-(gamma-L-Glu)(n). It functions in the pathway one-carbon metabolism; methanogenesis from CO(2); 5,10-methylene-5,6,7,8-tetrahydromethanopterin from 5,10-methenyl-5,6,7,8-tetrahydromethanopterin (coenzyme F420 route): step 1/1. Its function is as follows. Catalyzes the reversible reduction of methenyl-H(4)MPT(+) to methylene-H(4)MPT. The chain is F420-dependent methylenetetrahydromethanopterin dehydrogenase from Methanococcus vannielii (strain ATCC 35089 / DSM 1224 / JCM 13029 / OCM 148 / SB).